The following is a 446-amino-acid chain: Phosphoglucosamine mutase (446 aa).

Catalysis depends on Ser-103, which acts as the Phosphoserine intermediate. The Mg(2+) site is built by Ser-103, Asp-242, Asp-244, and Asp-246. Residue Ser-103 is modified to Phosphoserine.

The protein belongs to the phosphohexose mutase family. Mg(2+) serves as cofactor. In terms of processing, activated by phosphorylation.

The catalysed reaction is alpha-D-glucosamine 1-phosphate = D-glucosamine 6-phosphate. In terms of biological role, catalyzes the conversion of glucosamine-6-phosphate to glucosamine-1-phosphate. The chain is Phosphoglucosamine mutase from Vibrio atlanticus (strain LGP32) (Vibrio splendidus (strain Mel32)).